The primary structure comprises 408 residues: MKEKVILAYSGGLDTTAIIPWLKETYNYDVVCVCADCGQEEELDGLEQRALSCGAAKLYIEDITDEFCDNYIVPCVQAHAVYENKYLLGTSMARPLIAKRLVEIARKEGAVAICHGATGKGNDQIRFELTIKALAPDIKIIAPWRDSNWKLQSREDEIEYCRQHGIHLPFSTDCSYSRDRNIWHISHEGLELEDPANEPNYKHLLVLGCTPEEAPDEPEYVTMTFEKGVPKSVNGKAMKVSDIIRELNRLGAKHGIGIIDIVENRVVGMKSRGVYETPGGTILYEAHQQLEELVLDRDTTTFKMDVGNKFAQVVYEGKWETPLREALQAFVEKTQEYVTGEVKFRLYKGNIIKAGTTSPYSLYNESIASFKTGDMYDHHDADGFINLFGLSLKVRAMKKLENEKKNNK.

Residues 8–16 (AYSGGLDTT) and alanine 35 each bind ATP. L-citrulline-binding residues include tyrosine 86 and serine 91. Residue glycine 116 participates in ATP binding. Residues threonine 118, asparagine 122, and aspartate 123 each contribute to the L-aspartate site. Asparagine 122 contacts L-citrulline. The L-citrulline site is built by arginine 126, serine 177, serine 186, glutamate 263, and tyrosine 275.

Belongs to the argininosuccinate synthase family. Type 1 subfamily. Homotetramer.

The protein resides in the cytoplasm. The catalysed reaction is L-citrulline + L-aspartate + ATP = 2-(N(omega)-L-arginino)succinate + AMP + diphosphate + H(+). The protein operates within amino-acid biosynthesis; L-arginine biosynthesis; L-arginine from L-ornithine and carbamoyl phosphate: step 2/3. The protein is Argininosuccinate synthase of Lachnospira eligens (strain ATCC 27750 / DSM 3376 / VPI C15-48 / C15-B4) (Eubacterium eligens).